The following is an 849-amino-acid chain: Mechanosensitive ion channel protein 7 (849 aa).

The disordered stretch occupies residues 1–49 (MEFRKPFKSHSSYKQIISTGDQNEKTKKKKKLANLDDGDIAKTQSSGSS). The segment covering 9-21 (SHSSYKQIISTGD) has biased composition (polar residues). The next 6 membrane-spanning stretches (helical) occupy residues 231-251 (AITL…VLSL), 274-294 (LVLI…VFFI), 313-333 (TAVQ…FLFD), 344-364 (VLLL…LWLI), 606-626 (MISF…LEIA), and 642-662 (AFMF…LFII).

It belongs to the MscS (TC 1.A.23) family.

It is found in the membrane. Mechanosensitive channel that opens in response to stretch forces in the membrane lipid bilayer. This is Mechanosensitive ion channel protein 7 (MSL7) from Arabidopsis thaliana (Mouse-ear cress).